The chain runs to 683 residues: Heat shock protein homolog ECU03_0520 (683 aa).

The protein belongs to the heat shock protein 70 family.

The protein resides in the cytoplasm. The polypeptide is Heat shock protein homolog ECU03_0520 (Encephalitozoon cuniculi (strain GB-M1) (Microsporidian parasite)).